Here is a 785-residue protein sequence, read N- to C-terminus: Endonuclease MutS2 (785 aa).

335 to 342 (GPNTGGKT) lines the ATP pocket. The Smr domain occupies 710–785 (LDLRGERYED…GNGVTIVEFK (76 aa)).

It belongs to the DNA mismatch repair MutS family. MutS2 subfamily. In terms of assembly, homodimer. Binds to stalled ribosomes, contacting rRNA.

In terms of biological role, endonuclease that is involved in the suppression of homologous recombination and thus may have a key role in the control of bacterial genetic diversity. Functionally, acts as a ribosome collision sensor, splitting the ribosome into its 2 subunits. Detects stalled/collided 70S ribosomes which it binds and splits by an ATP-hydrolysis driven conformational change. Acts upstream of the ribosome quality control system (RQC), a ribosome-associated complex that mediates the extraction of incompletely synthesized nascent chains from stalled ribosomes and their subsequent degradation. Probably generates substrates for RQC. The sequence is that of Endonuclease MutS2 from Listeria monocytogenes serovar 1/2a (strain ATCC BAA-679 / EGD-e).